The chain runs to 506 residues: Maturase K (506 aa).

It belongs to the intron maturase 2 family. MatK subfamily.

The protein resides in the plastid. It is found in the chloroplast. Functionally, usually encoded in the trnK tRNA gene intron. Probably assists in splicing its own and other chloroplast group II introns. The polypeptide is Maturase K (Ocimum basilicum (Sweet basil)).